The following is a 392-amino-acid chain: Digeranylgeranylglycerophospholipid reductase (392 aa).

10 residues coordinate FAD: Gly15, Glu34, Cys45, Ala46, Gly48, Arg99, Ala123, Asp279, Gly291, and Ile292. Residue Val370 participates in a 2,3-bis-O-(geranylgeranyl)-sn-glycerol 1-phospholipid binding.

This sequence belongs to the geranylgeranyl reductase family. DGGGPL reductase subfamily. It depends on FAD as a cofactor.

The enzyme catalyses a 2,3-bis-O-phytanyl-sn-glycerol 1-phospholipid + 8 oxidized 2[4Fe-4S]-[ferredoxin] = a 2,3-bis-O-(geranylgeranyl)-sn-glycerol 1-phospholipid + 8 reduced 2[4Fe-4S]-[ferredoxin] + 16 H(+). The catalysed reaction is 2,3-bis-O-(phytanyl)-sn-glycerol 1-phosphate + 8 oxidized 2[4Fe-4S]-[ferredoxin] = 2,3-bis-O-(geranylgeranyl)-sn-glycerol 1-phosphate + 8 reduced 2[4Fe-4S]-[ferredoxin] + 16 H(+). It catalyses the reaction a 2,3-bis-O-phytanyl-sn-glycerol 1-phospholipid + 8 A = a 2,3-bis-O-(geranylgeranyl)-sn-glycerol 1-phospholipid + 8 AH2. It carries out the reaction CDP-2,3-bis-O-(geranylgeranyl)-sn-glycerol + 8 AH2 = CDP-2,3-bis-O-(phytanyl)-sn-glycerol + 8 A. The enzyme catalyses archaetidylserine + 8 AH2 = 2,3-bis-O-phytanyl-sn-glycero-3-phospho-L-serine + 8 A. It participates in membrane lipid metabolism; glycerophospholipid metabolism. Is involved in the reduction of 2,3-digeranylgeranylglycerophospholipids (unsaturated archaeols) into 2,3-diphytanylglycerophospholipids (saturated archaeols) in the biosynthesis of archaeal membrane lipids. Catalyzes the formation of archaetidic acid (2,3-di-O-phytanyl-sn-glyceryl phosphate) from 2,3-di-O-geranylgeranylglyceryl phosphate (DGGGP) via the hydrogenation of each double bond of the isoprenoid chains. Is also probably able to reduce double bonds of geranyl groups in CDP-2,3-bis-O-(geranylgeranyl)-sn-glycerol and archaetidylserine, thus acting at various stages in the biosynthesis of archaeal membrane lipids. The protein is Digeranylgeranylglycerophospholipid reductase of Methanocella arvoryzae (strain DSM 22066 / NBRC 105507 / MRE50).